Reading from the N-terminus, the 262-residue chain is Small ribosomal subunit protein eS1 (262 aa).

The protein belongs to the eukaryotic ribosomal protein eS1 family. In terms of assembly, component of the small ribosomal subunit. Mature ribosomes consist of a small (40S) and a large (60S) subunit. The 40S subunit contains about 33 different proteins and 1 molecule of RNA (18S). The 60S subunit contains about 49 different proteins and 3 molecules of RNA (25S, 5.8S and 5S).

The protein resides in the cytoplasm. The sequence is that of Small ribosomal subunit protein eS1 from Plasmodium vivax (strain Salvador I).